The sequence spans 116 residues: Large ribosomal subunit protein bL19 (116 aa).

This sequence belongs to the bacterial ribosomal protein bL19 family.

In terms of biological role, this protein is located at the 30S-50S ribosomal subunit interface and may play a role in the structure and function of the aminoacyl-tRNA binding site. This is Large ribosomal subunit protein bL19 from Pseudomonas entomophila (strain L48).